The chain runs to 538 residues: Bifunctional purine biosynthesis protein PurH (538 aa).

The MGS-like domain maps to 6 to 158; sequence KHIPAPDLHR…KNHAYVATVV (153 aa).

It belongs to the PurH family.

It carries out the reaction (6R)-10-formyltetrahydrofolate + 5-amino-1-(5-phospho-beta-D-ribosyl)imidazole-4-carboxamide = 5-formamido-1-(5-phospho-D-ribosyl)imidazole-4-carboxamide + (6S)-5,6,7,8-tetrahydrofolate. The enzyme catalyses IMP + H2O = 5-formamido-1-(5-phospho-D-ribosyl)imidazole-4-carboxamide. It participates in purine metabolism; IMP biosynthesis via de novo pathway; 5-formamido-1-(5-phospho-D-ribosyl)imidazole-4-carboxamide from 5-amino-1-(5-phospho-D-ribosyl)imidazole-4-carboxamide (10-formyl THF route): step 1/1. Its pathway is purine metabolism; IMP biosynthesis via de novo pathway; IMP from 5-formamido-1-(5-phospho-D-ribosyl)imidazole-4-carboxamide: step 1/1. The sequence is that of Bifunctional purine biosynthesis protein PurH from Brucella abortus (strain S19).